The sequence spans 183 residues: uncharacterized protein (183 aa).

It belongs to the Bcl-2 family.

This is an uncharacterized protein from Equine herpesvirus 2 (strain 86/87) (EHV-2).